The sequence spans 655 residues: Chaperone protein DnaK 3 (655 aa).

The residue at position 197 (T197) is a Phosphothreonine; by autocatalysis.

This sequence belongs to the heat shock protein 70 family.

In terms of biological role, acts as a chaperone. The sequence is that of Chaperone protein DnaK 3 from Synechococcus sp. (strain ATCC 27144 / PCC 6301 / SAUG 1402/1) (Anacystis nidulans).